Consider the following 442-residue polypeptide: tRNA modification GTPase MnmE (442 aa).

(6S)-5-formyl-5,6,7,8-tetrahydrofolate contacts are provided by R27, E84, and K124. The 146-residue stretch at 221-366 (GLHVVIVGAP…LLDALQAFAE (146 aa)) folds into the TrmE-type G domain. Residues 231-236 (NAGKSS), 250-256 (SEEAGTT), and 275-278 (DTAG) contribute to the GTP site. Mg(2+) contacts are provided by S235 and T256. Residue K442 participates in (6S)-5-formyl-5,6,7,8-tetrahydrofolate binding.

The protein belongs to the TRAFAC class TrmE-Era-EngA-EngB-Septin-like GTPase superfamily. TrmE GTPase family. In terms of assembly, homodimer. Heterotetramer of two MnmE and two MnmG subunits. K(+) serves as cofactor.

It is found in the cytoplasm. Its function is as follows. Exhibits a very high intrinsic GTPase hydrolysis rate. Involved in the addition of a carboxymethylaminomethyl (cmnm) group at the wobble position (U34) of certain tRNAs, forming tRNA-cmnm(5)s(2)U34. This chain is tRNA modification GTPase MnmE, found in Brucella ovis (strain ATCC 25840 / 63/290 / NCTC 10512).